Consider the following 320-residue polypeptide: MTAWDGVLPFYPQPRHAASFSVPLLIVILVFLSLAASFLFILPGIRGHSRWFWLVRVLLSLFIGAEIVAVHFSGDWFVGRVWTNTSYKAFSPSRVQVHVGLHVGLAGVNITLRGTPRQQLNETIDYNERFTWRLNEDYTKEYVHALEKGLPDPVLYLAEKFTPSSPCGLYHQYHLAGHYAAATLWVAFCFWIIANALLSMPAPLYGGLALLTTGAFTLFGVFAFASISSVPLCHFRLGSAVLTPYYGASFWLTLATGILSLLLGGAVVILHYTRPSALRSFLDLSVKDCSNQAKGNSPLTLNNPQHEQLKSPDLNITTLL.

Residues 22–42 (VPLLIVILVFLSLAASFLFIL) form a helical membrane-spanning segment. The Cytoplasmic segment spans residues 43-51 (PGIRGHSRW). A helical membrane pass occupies residues 52 to 72 (FWLVRVLLSLFIGAEIVAVHF). Over 73–183 (SGDWFVGRVW…HLAGHYAAAT (111 aa)) the chain is Extracellular. Residues Asn84, Asn109, and Asn121 are each glycosylated (N-linked (GlcNAc...) asparagine). Residues 184–204 (LWVAFCFWIIANALLSMPAPL) form a helical membrane-spanning segment. The Cytoplasmic segment spans residues 205–206 (YG). A helical membrane pass occupies residues 207–227 (GLALLTTGAFTLFGVFAFASI). The Extracellular segment spans residues 228–249 (SSVPLCHFRLGSAVLTPYYGAS). Residues 250–270 (FWLTLATGILSLLLGGAVVIL) form a helical membrane-spanning segment. The Cytoplasmic portion of the chain corresponds to 271 to 320 (HYTRPSALRSFLDLSVKDCSNQAKGNSPLTLNNPQHEQLKSPDLNITTLL).

The protein belongs to the DUOXA family. As to quaternary structure, heterodimer with DUXA2; disulfide-linked. Interacts with CSNK1G2. In terms of processing, N-glycosylated.

It is found in the endoplasmic reticulum membrane. Functionally, required for the maturation and the transport from the endoplasmic reticulum to the plasma membrane of functional DUOX2. May play a role in thyroid hormone synthesis. This chain is Dual oxidase maturation factor 2 (Duoxa2), found in Mus musculus (Mouse).